The primary structure comprises 568 residues: 2-succinyl-5-enolpyruvyl-6-hydroxy-3-cyclohexene-1-carboxylate synthase (568 aa).

It belongs to the TPP enzyme family. MenD subfamily. Homodimer. Mg(2+) serves as cofactor. Mn(2+) is required as a cofactor. It depends on thiamine diphosphate as a cofactor.

It carries out the reaction isochorismate + 2-oxoglutarate + H(+) = 5-enolpyruvoyl-6-hydroxy-2-succinyl-cyclohex-3-ene-1-carboxylate + CO2. It participates in quinol/quinone metabolism; 1,4-dihydroxy-2-naphthoate biosynthesis; 1,4-dihydroxy-2-naphthoate from chorismate: step 2/7. Its pathway is quinol/quinone metabolism; menaquinone biosynthesis. Its function is as follows. Catalyzes the thiamine diphosphate-dependent decarboxylation of 2-oxoglutarate and the subsequent addition of the resulting succinic semialdehyde-thiamine pyrophosphate anion to isochorismate to yield 2-succinyl-5-enolpyruvyl-6-hydroxy-3-cyclohexene-1-carboxylate (SEPHCHC). This chain is 2-succinyl-5-enolpyruvyl-6-hydroxy-3-cyclohexene-1-carboxylate synthase, found in Pasteurella multocida (strain Pm70).